Consider the following 317-residue polypeptide: MRHLLSAADLTRDEATAILDDADRFLQALAGREVKKLPTLRGRTIITMFYENSTRTRVSFEVAGKWMSADVINVSASGSSVAKGESLRDTALTLRAIGADALIVRHPASGVAAQLAQWTAEGEGGPAVVNAGDGTHEHPTQALLDALTIRQRLGSLEGRRVVIVGDILHSRVARSNALLLNTFGAEVVLVAPPTLLPVGVGTWPVTVTHDLDAELPGADAVLMLRVQAERMTGGFFPSAREYSVLYGMSEARQRLLPEHAVVLHPGPMLRGMEIASAVADSSQSGVLQQVSNGVHIRMAVLFHLLVGSSDSPEAVPA.

Arg-55 and Thr-56 together coordinate carbamoyl phosphate. Lys-83 is an L-aspartate binding site. Residues Arg-105, His-138, and Gln-141 each coordinate carbamoyl phosphate. Arg-171 and Arg-225 together coordinate L-aspartate. Carbamoyl phosphate-binding residues include Gly-266 and Pro-267.

The protein belongs to the aspartate/ornithine carbamoyltransferase superfamily. ATCase family. Heterododecamer (2C3:3R2) of six catalytic PyrB chains organized as two trimers (C3), and six regulatory PyrI chains organized as three dimers (R2).

It carries out the reaction carbamoyl phosphate + L-aspartate = N-carbamoyl-L-aspartate + phosphate + H(+). Its pathway is pyrimidine metabolism; UMP biosynthesis via de novo pathway; (S)-dihydroorotate from bicarbonate: step 2/3. Functionally, catalyzes the condensation of carbamoyl phosphate and aspartate to form carbamoyl aspartate and inorganic phosphate, the committed step in the de novo pyrimidine nucleotide biosynthesis pathway. The sequence is that of Aspartate carbamoyltransferase catalytic subunit from Mycobacteroides abscessus (strain ATCC 19977 / DSM 44196 / CCUG 20993 / CIP 104536 / JCM 13569 / NCTC 13031 / TMC 1543 / L948) (Mycobacterium abscessus).